Reading from the N-terminus, the 103-residue chain is Thrombin inhibitor rhodniin (103 aa).

2 Kazal-like domains span residues 1 to 50 (EGGE…PCEP) and 51 to 103 (DEDE…PCRT). Cystine bridges form between Cys6-Cys31, Cys8-Cys27, Cys16-Cys48, Cys57-Cys84, Cys60-Cys80, and Cys69-Cys101.

It localises to the secreted. Thrombin-specific inhibitor. Appears to form 1:1 complexes with thrombin. Prevents blood clotting to allow the insect to feed on blood. This is Thrombin inhibitor rhodniin from Rhodnius prolixus (Triatomid bug).